We begin with the raw amino-acid sequence, 328 residues long: Phosphate acetyltransferase (328 aa).

This sequence belongs to the phosphate acetyltransferase and butyryltransferase family.

The protein localises to the cytoplasm. The enzyme catalyses acetyl-CoA + phosphate = acetyl phosphate + CoA. It functions in the pathway metabolic intermediate biosynthesis; acetyl-CoA biosynthesis; acetyl-CoA from acetate: step 2/2. The protein is Phosphate acetyltransferase (pta) of Staphylococcus aureus (strain MSSA476).